Here is a 213-residue protein sequence, read N- to C-terminus: Ras-related protein Rab-4B (213 aa).

Alanine 2 bears the N-acetylalanine mark. GDP contacts are provided by glycine 18, threonine 19, glycine 20, lysine 21, serine 22, and cysteine 23. Residues glycine 18, threonine 19, glycine 20, lysine 21, serine 22, cysteine 23, serine 37, histidine 39, and threonine 40 each coordinate GTP. Serine 22 is a binding site for Mg(2+). Residues 39 to 44 carry the Switch 1 motif; sequence HTIGVE. The Mg(2+) site is built by threonine 40 and aspartate 63. The short motif at 65–74 is the Switch 2 element; that stretch reads AGQERFRSVT. Glycine 66 is a binding site for GTP. At glutamine 67 the chain carries 5-glutamyl serotonin. Residues asparagine 121, lysine 122, aspartate 124, alanine 152, and leucine 153 each contribute to the GDP site. Asparagine 121, lysine 122, aspartate 124, alanine 152, and leucine 153 together coordinate GTP. A phosphoserine mark is found at serine 185 and serine 193. 2 S-geranylgeranyl cysteine lipidation sites follow: cysteine 211 and cysteine 213. Cysteine 213 is subject to Cysteine methyl ester.

Belongs to the small GTPase superfamily. Rab family. In terms of assembly, interacts (GTP-bound form) with RUFY1; the interaction allows endosomal tethering and fusion. The cofactor is Mg(2+). Serotonylation of Gln-67 by TGM2 during activation and aggregation of platelets leads to constitutive activation of GTPase activity.

It is found in the cell membrane. Its subcellular location is the early endosome membrane. It catalyses the reaction GTP + H2O = GDP + phosphate + H(+). With respect to regulation, regulated by guanine nucleotide exchange factors (GEFs) which promote the exchange of bound GDP for free GTP. Regulated by GTPase activating proteins (GAPs) which increase the GTP hydrolysis activity. Inhibited by GDP dissociation inhibitors (GDIs). Its function is as follows. The small GTPases Rab are key regulators of intracellular membrane trafficking, from the formation of transport vesicles to their fusion with membranes. Rabs cycle between an inactive GDP-bound form and an active GTP-bound form that is able to recruit to membranes different set of downstream effectors directly responsible for vesicle formation, movement, tethering and fusion. RAB4B mediates endosomal tethering and fusion through the interaction with RUFY1 and RAB14. Acts as a regulator of platelet alpha-granule release during activation and aggregation of platelets. In Homo sapiens (Human), this protein is Ras-related protein Rab-4B.